The following is a 113-amino-acid chain: Hydrogenase maturation factor HypA (113 aa).

A Ni(2+)-binding site is contributed by H2. Residues C73, C76, C89, and C92 each contribute to the Zn(2+) site.

Belongs to the HypA/HybF family.

In terms of biological role, involved in the maturation of [NiFe] hydrogenases. Required for nickel insertion into the metal center of the hydrogenase. The protein is Hydrogenase maturation factor HypA of Cereibacter sphaeroides (Rhodobacter sphaeroides).